Consider the following 329-residue polypeptide: MSIEIRNVSKNFNAFKALDDINLDIQSGELVALLGPSGCGKTTLLRIIAGLETPDAGNIVFHGEDVSQHDVRDRNVGFVFQHYALFRHMTVFDNVAFGLRMKPKGERPGESAIKAKVHELLNMVQLDWLADRYPEQLSGGQRQRIALARALAVEPKILLLDEPFGALDAKVRKELRRWLARLHEEINLTSVFVTHDQEEAMEVADRIVVMNKGVIEQIGSPGEVYENPASDFVYHFLGDSNRLQLGNDQHLLFRPHEVSLSRSAVAEHRAAEVRDIRPLGAITRVTLKVDGQDELIEAEVVKDHDSLAGLARGETLYFKPKAFQPVANL.

Residues 3 to 237 (IEIRNVSKNF…PASDFVYHFL (235 aa)) form the ABC transporter domain. 35-42 (GPSGCGKT) is an ATP binding site.

This sequence belongs to the ABC transporter superfamily. Sulfate/tungstate importer (TC 3.A.1.6) family. The complex is composed of two ATP-binding proteins (CysA), two transmembrane proteins (CysT and CysW) and a solute-binding protein (CysP).

The protein localises to the cell inner membrane. The catalysed reaction is sulfate(out) + ATP + H2O = sulfate(in) + ADP + phosphate + H(+). It carries out the reaction thiosulfate(out) + ATP + H2O = thiosulfate(in) + ADP + phosphate + H(+). In terms of biological role, part of the ABC transporter complex CysAWTP involved in sulfate/thiosulfate import. Responsible for energy coupling to the transport system. The polypeptide is Sulfate/thiosulfate import ATP-binding protein CysA (Pseudomonas aeruginosa (strain ATCC 15692 / DSM 22644 / CIP 104116 / JCM 14847 / LMG 12228 / 1C / PRS 101 / PAO1)).